Consider the following 151-residue polypeptide: SsrA-binding protein (151 aa).

This sequence belongs to the SmpB family.

It is found in the cytoplasm. In terms of biological role, required for rescue of stalled ribosomes mediated by trans-translation. Binds to transfer-messenger RNA (tmRNA), required for stable association of tmRNA with ribosomes. tmRNA and SmpB together mimic tRNA shape, replacing the anticodon stem-loop with SmpB. tmRNA is encoded by the ssrA gene; the 2 termini fold to resemble tRNA(Ala) and it encodes a 'tag peptide', a short internal open reading frame. During trans-translation Ala-aminoacylated tmRNA acts like a tRNA, entering the A-site of stalled ribosomes, displacing the stalled mRNA. The ribosome then switches to translate the ORF on the tmRNA; the nascent peptide is terminated with the 'tag peptide' encoded by the tmRNA and targeted for degradation. The ribosome is freed to recommence translation, which seems to be the essential function of trans-translation. This is SsrA-binding protein from Campylobacter concisus (strain 13826).